The following is a 1904-amino-acid chain: Callose synthase 10 (1904 aa).

The stretch at 100 to 132 (VIKQKLAKRDGASIDRDRDIERLWEFYKLYKRR) is one HAT 1 repeat. 6 helical membrane passes run 491–511 (SFIR…IIAF), 532–552 (AIMN…AYSM), 562–582 (VIRF…YVKV), 594–614 (FFFH…LIFG), 661–681 (YVAF…FLQI), and 722–742 (VLAI…AIIG). The LRR 1 repeat unit spans residues 678–701 (FLQIKPLVKPTNTIIHLPPFQYSW). LRR repeat units follow at residues 751–774 (LGEI…FAQN) and 925–948 (TLNL…LIRN). The HAT 2 repeat unit spans residues 1074 to 1107 (YSSSELRSENEDGISILFYLQKIFPDEWENFLER). Residues 1159 to 1181 (FLERRGLGVDDASLTNMPRGFES) form an LRR 4 repeat. 9 consecutive transmembrane segments (helical) span residues 1474–1494 (FTTV…YVFL), 1529–1549 (FLVQ…ILEL), 1554–1574 (AIFS…TFSL), 1621–1641 (AFEV…DGGA), 1644–1664 (FVLL…APYI), 1747–1767 (LALY…FKLF), 1783–1803 (FLQG…IAMT), 1811–1831 (FACV…AITW), and 1853–1873 (AAMG…PFIS). An HAT 3 repeat occupies 1659–1691 (LFAPYIFNPSGFEWQKTVEDFEDWVSWLMYKGG).

The protein belongs to the glycosyltransferase 48 family.

It is found in the cell membrane. It catalyses the reaction [(1-&gt;3)-beta-D-glucosyl](n) + UDP-alpha-D-glucose = [(1-&gt;3)-beta-D-glucosyl](n+1) + UDP + H(+). Functionally, involved in sporophytic and gametophytic development. Required for normal plant development and for the proper accumulation of callose at cell plates, cll walls and plasmodesmata. During pollen formation, required for the entry of microspores into mitosis. During plant growth and development, callose is found as a transitory component of the cell plate in dividing cells, is a major component of pollen mother cell walls and pollen tubes, and is found as a structural component of plasmodesmatal canals. Required for proper cell division and tissue patterning throughout plant organs, including stomatal patterning. This chain is Callose synthase 10 (CALS10), found in Arabidopsis thaliana (Mouse-ear cress).